Consider the following 66-residue polypeptide: Protein I177L (66 aa).

N-linked (GlcNAc...) asparagine; by host glycosylation occurs at Asn-11.

This sequence belongs to the asfivirus I177L family.

The protein resides in the virion. This chain is Protein I177L, found in Ornithodoros (relapsing fever ticks).